The chain runs to 534 residues: CTP synthase (534 aa).

Residues 1–267 (MTKYIFVTGG…DQIVCDHLKL (267 aa)) are amidoligase domain. Residue S13 coordinates CTP. Residue S13 coordinates UTP. Position 14–19 (14–19 (SIGKGI)) interacts with ATP. Y54 contributes to the L-glutamine binding site. D71 is an ATP binding site. Residues D71 and E141 each contribute to the Mg(2+) site. CTP-binding positions include 148–150 (DIE), 188–193 (KTKPTQ), and K224. Residues 188–193 (KTKPTQ) and K224 contribute to the UTP site. Positions 292–534 (KIALVGKYVE…FVTAAVENAK (243 aa)) constitute a Glutamine amidotransferase type-1 domain. G354 provides a ligand contact to L-glutamine. Catalysis depends on C381, which acts as the Nucleophile; for glutamine hydrolysis. Residues 382–385 (LGMQ), E405, and R463 each bind L-glutamine. Residues H508 and E510 contribute to the active site.

It belongs to the CTP synthase family. In terms of assembly, homotetramer.

The enzyme catalyses UTP + L-glutamine + ATP + H2O = CTP + L-glutamate + ADP + phosphate + 2 H(+). The catalysed reaction is L-glutamine + H2O = L-glutamate + NH4(+). It catalyses the reaction UTP + NH4(+) + ATP = CTP + ADP + phosphate + 2 H(+). Its pathway is pyrimidine metabolism; CTP biosynthesis via de novo pathway; CTP from UDP: step 2/2. Its activity is regulated as follows. Allosterically activated by GTP, when glutamine is the substrate; GTP has no effect on the reaction when ammonia is the substrate. The allosteric effector GTP functions by stabilizing the protein conformation that binds the tetrahedral intermediate(s) formed during glutamine hydrolysis. Inhibited by the product CTP, via allosteric rather than competitive inhibition. In terms of biological role, catalyzes the ATP-dependent amination of UTP to CTP with either L-glutamine or ammonia as the source of nitrogen. Regulates intracellular CTP levels through interactions with the four ribonucleotide triphosphates. This chain is CTP synthase, found in Streptococcus thermophilus (strain CNRZ 1066).